We begin with the raw amino-acid sequence, 378 residues long: MASPRLENFRRIVVKVGSSLLVDSEAGEVRASWLAALAADIARLHGRGCELLVVSSGSIALGRSRLKLPRGPLKLEESQAAAAVGQIALARIWSEVLGDHGIGAGQILVTLQDTEERRRYLNARSTIAKLLDWRAVPVINENDTVATAEIRYGDNDRLAARVATMASADLLVLLSDIDGLYTAPPAQDPNARLIPVVESITADIEAMAGSAASEFSRGGMRTKIEAAKIATTGGTHMLIASGKIEHPLAAIANGGRCTWFLTPANPVTARKRWIAGSLEPKGTLTIDAGAVTALRAGKSLLPAGVIRVDGQFARGDAVVVRGPDTHEIGRGLVAYDADDAERIKGRSSPDVAVILGISGRAEMIHRDDLVIGPAGAMG.

Lysine 15 contributes to the ATP binding site. The substrate site is built by serine 56, aspartate 143, and asparagine 155. 175 to 176 lines the ATP pocket; that stretch reads SD. Residues 281–358 enclose the PUA domain; the sequence is KGTLTIDAGA…PDVAVILGIS (78 aa).

Belongs to the glutamate 5-kinase family.

The protein localises to the cytoplasm. It catalyses the reaction L-glutamate + ATP = L-glutamyl 5-phosphate + ADP. The protein operates within amino-acid biosynthesis; L-proline biosynthesis; L-glutamate 5-semialdehyde from L-glutamate: step 1/2. Its function is as follows. Catalyzes the transfer of a phosphate group to glutamate to form L-glutamate 5-phosphate. The polypeptide is Glutamate 5-kinase (Bradyrhizobium sp. (strain BTAi1 / ATCC BAA-1182)).